Here is a 244-residue protein sequence, read N- to C-terminus: Acetylglutamate kinase (244 aa).

Residues 40–41, arginine 62, and asparagine 155 contribute to the substrate site; that span reads GG.

Belongs to the acetylglutamate kinase family. ArgB subfamily.

It is found in the cytoplasm. It catalyses the reaction N-acetyl-L-glutamate + ATP = N-acetyl-L-glutamyl 5-phosphate + ADP. It functions in the pathway amino-acid biosynthesis; L-arginine biosynthesis; N(2)-acetyl-L-ornithine from L-glutamate: step 2/4. Catalyzes the ATP-dependent phosphorylation of N-acetyl-L-glutamate. This chain is Acetylglutamate kinase, found in Leuconostoc mesenteroides subsp. mesenteroides (strain ATCC 8293 / DSM 20343 / BCRC 11652 / CCM 1803 / JCM 6124 / NCDO 523 / NBRC 100496 / NCIMB 8023 / NCTC 12954 / NRRL B-1118 / 37Y).